The chain runs to 576 residues: 2-succinyl-5-enolpyruvyl-6-hydroxy-3-cyclohexene-1-carboxylate synthase (576 aa).

This sequence belongs to the TPP enzyme family. MenD subfamily. In terms of assembly, homodimer. It depends on Mg(2+) as a cofactor. Mn(2+) serves as cofactor. Thiamine diphosphate is required as a cofactor.

It carries out the reaction isochorismate + 2-oxoglutarate + H(+) = 5-enolpyruvoyl-6-hydroxy-2-succinyl-cyclohex-3-ene-1-carboxylate + CO2. The protein operates within quinol/quinone metabolism; 1,4-dihydroxy-2-naphthoate biosynthesis; 1,4-dihydroxy-2-naphthoate from chorismate: step 2/7. Its pathway is quinol/quinone metabolism; menaquinone biosynthesis. In terms of biological role, catalyzes the thiamine diphosphate-dependent decarboxylation of 2-oxoglutarate and the subsequent addition of the resulting succinic semialdehyde-thiamine pyrophosphate anion to isochorismate to yield 2-succinyl-5-enolpyruvyl-6-hydroxy-3-cyclohexene-1-carboxylate (SEPHCHC). The chain is 2-succinyl-5-enolpyruvyl-6-hydroxy-3-cyclohexene-1-carboxylate synthase from Photobacterium profundum (strain SS9).